The following is a 180-amino-acid chain: ATP-dependent protease subunit HslV (180 aa).

Thr-9 is a catalytic residue. 3 residues coordinate Na(+): Ala-164, Cys-167, and Thr-170.

It belongs to the peptidase T1B family. HslV subfamily. As to quaternary structure, a double ring-shaped homohexamer of HslV is capped on each side by a ring-shaped HslU homohexamer. The assembly of the HslU/HslV complex is dependent on binding of ATP.

The protein resides in the cytoplasm. The enzyme catalyses ATP-dependent cleavage of peptide bonds with broad specificity.. Allosterically activated by HslU binding. Protease subunit of a proteasome-like degradation complex believed to be a general protein degrading machinery. The chain is ATP-dependent protease subunit HslV from Leptospira borgpetersenii serovar Hardjo-bovis (strain JB197).